The sequence spans 213 residues: Response regulator GacA (213 aa).

In terms of domain architecture, Response regulatory spans 3–119; that stretch reads RVLVVDDHDL…EMVQAIRLVF (117 aa). Aspartate 54 is subject to 4-aspartylphosphate. In terms of domain architecture, HTH luxR-type spans 142 to 207; it reads SDSPFDALSE…ELTLLAVRHG (66 aa). The H-T-H motif DNA-binding region spans 166–185; sequence VQIISDKLCLSPKTVNTYRY.

Post-translationally, phosphorylated by GacS.

Member of the two-component regulatory system GacA/GacS which controls the expression of secondary metabolites and extracellular products. Acts (probably primarily) by activating expression of CsrA1 and CsrA2 antagonist small RNAs (sRNA) RsmX, RsmY and RsmZ which bind to and prevent translation repression by CsrA1 and CsrA2. Involved in the regulation of secondary metabolism and in the synthesis of the antifungal factors cyanide, 2,4-diacetylphloroglucinol and pyoluteorin. Involved in synthesis of the autoinducing signal (unrelated to N-acylhomoserine lactones, induces the Gac/Csr cascade). Exercises positive post-transcriptional control over the hcnABC and aprA genes; acts upstream of CsrA2 (rsmA). Controls expression of csrA1 (rsmE) and csrA2. This is Response regulator GacA from Pseudomonas protegens (strain DSM 19095 / LMG 27888 / CFBP 6595 / CHA0).